The following is a 71-amino-acid chain: Probable ribosome maturation protein RlbA (71 aa).

The region spanning 12 to 69 is the S4 RNA-binding domain; that stretch reads ITLGQFLKLADVIQSGGMAKWFLSEHEVLVNDEPDNRRGRKLYVGDVVEIEGFGSFQV.

In terms of biological role, may assist in the assembly of the 50S subunit. In Bacillus subtilis (strain 168), this protein is Probable ribosome maturation protein RlbA.